The primary structure comprises 82 residues: Cortexin-1 (82 aa).

A disordered region spans residues 1 to 20 (MSAPWTLSPEPLPPSTGPPV). Residues 30–50 (TVFAFVLCLLVVLVLLMVRCV) traverse the membrane as a helical segment.

This sequence belongs to the cortexin family. As to expression, neuron specific.

The protein localises to the membrane. Functionally, may mediate extracellular or intracellular signaling of cortical neurons during forebrain development. The polypeptide is Cortexin-1 (Ctxn1) (Rattus norvegicus (Rat)).